Here is a 607-residue protein sequence, read N- to C-terminus: UvrABC system protein C (607 aa).

Residues 16–94 (ARPGVYRMFD…IKQWRPPYNI (79 aa)) form the GIY-YIG domain. Positions 203-238 (QQLGNELNAEMEKAAMALNFEKAAELRDQIALLRRV) constitute a UVR domain.

The protein belongs to the UvrC family. In terms of assembly, interacts with UvrB in an incision complex.

The protein localises to the cytoplasm. Functionally, the UvrABC repair system catalyzes the recognition and processing of DNA lesions. UvrC both incises the 5' and 3' sides of the lesion. The N-terminal half is responsible for the 3' incision and the C-terminal half is responsible for the 5' incision. The chain is UvrABC system protein C from Pseudomonas putida (strain W619).